The chain runs to 363 residues: Probable auxin efflux carrier component 5a (363 aa).

Helical transmembrane passes span 7–27, 39–59, 72–92, 103–123, 134–154, 222–242, 246–266, 281–301, 307–327, and 342–362; these read VYKV…GYGS, CDAV…FEFT, VAAD…WARF, SITS…VPMA, LVVQ…LFVL, FVGI…PSAF, VLIM…LFMA, LGLV…SIAV, VLRV…FIFA, and IFGM…LELI.

This sequence belongs to the auxin efflux carrier (TC 2.A.69.1) family. As to expression, expressed in leaves, shoot apex and panicles. Expressed in roots, stem bases, stems, leaves and young panicles.

It is found in the membrane. Functionally, may act as a component of the auxin efflux carrier. The polypeptide is Probable auxin efflux carrier component 5a (Oryza sativa subsp. japonica (Rice)).